The sequence spans 299 residues: Ribosomal protein L11 methyltransferase (299 aa).

S-adenosyl-L-methionine is bound by residues Thr-144, Gly-165, Asp-187, and Asn-229.

This sequence belongs to the methyltransferase superfamily. PrmA family.

The protein resides in the cytoplasm. It catalyses the reaction L-lysyl-[protein] + 3 S-adenosyl-L-methionine = N(6),N(6),N(6)-trimethyl-L-lysyl-[protein] + 3 S-adenosyl-L-homocysteine + 3 H(+). Functionally, methylates ribosomal protein L11. This is Ribosomal protein L11 methyltransferase from Teredinibacter turnerae (strain ATCC 39867 / T7901).